The primary structure comprises 407 residues: MTYPNLLDRFLTYVKVNTRSDEHSTTTPSTQSQVDFATNVLIPEMKRVGLQNVYYLPNGFAIGTLPANDPSLTRKIGFISHMDTADFNAEGVNPQVIENYDGGVIELGNSGFKLDPADFKSLEKYPGQTLITTDGTTLLGADDKSGIAEIMTAIEYLTAHPEIKHCEIRVGFGPDEEIGVGANKFDAEDFDVDFAYTVDGGPLGELQYETFSAAGAELHFQGRNVHPGTAKGQMVNALQLAIDFHNQLPENDRPELTEGYQGFYHLMDVTGSVEEARASYIIRDFEKDAFEARKASMQSIADKMNAELGSYRVTLNLTDQYYNMKEVIEKDMTPITIAKAVMEDLGITPIIEPIRGGTDGSKISFMGIPTPNIFAGGENMHGRFEYVSLQTMERAVDTIIGIVAYKG.

A Zn(2+)-binding site is contributed by histidine 81. Aspartate 83 is an active-site residue. Aspartate 142 is a binding site for Zn(2+). Glutamate 176 serves as the catalytic Proton acceptor. Zn(2+) is bound by residues glutamate 177, aspartate 199, and histidine 381.

This sequence belongs to the peptidase M20B family. Zn(2+) is required as a cofactor.

It localises to the cytoplasm. The catalysed reaction is Release of the N-terminal residue from a tripeptide.. Its function is as follows. Cleaves the N-terminal amino acid of tripeptides. This Streptococcus pneumoniae (strain P1031) protein is Peptidase T.